We begin with the raw amino-acid sequence, 449 residues long: UDP-N-acetylmuramoylalanine--D-glutamate ligase (449 aa).

118–124 lines the ATP pocket; that stretch reads GTNGKTT.

Belongs to the MurCDEF family.

The protein resides in the cytoplasm. The catalysed reaction is UDP-N-acetyl-alpha-D-muramoyl-L-alanine + D-glutamate + ATP = UDP-N-acetyl-alpha-D-muramoyl-L-alanyl-D-glutamate + ADP + phosphate + H(+). It participates in cell wall biogenesis; peptidoglycan biosynthesis. In terms of biological role, cell wall formation. Catalyzes the addition of glutamate to the nucleotide precursor UDP-N-acetylmuramoyl-L-alanine (UMA). This Staphylococcus aureus (strain MRSA252) protein is UDP-N-acetylmuramoylalanine--D-glutamate ligase.